The following is a 500-amino-acid chain: uncharacterized protein (500 aa).

This is an uncharacterized protein from Halorubrum sp. PV6 (HRPV-1).